The chain runs to 58 residues: Small ribosomal subunit protein bS21B (58 aa).

It belongs to the bacterial ribosomal protein bS21 family.

The polypeptide is Small ribosomal subunit protein bS21B (Trichormus variabilis (strain ATCC 29413 / PCC 7937) (Anabaena variabilis)).